We begin with the raw amino-acid sequence, 555 residues long: Dihydroxy-acid dehydratase (555 aa).

Residue aspartate 80 participates in Mg(2+) binding. Residue cysteine 121 coordinates [2Fe-2S] cluster. Mg(2+) is bound by residues aspartate 122 and lysine 123. Lysine 123 bears the N6-carboxylysine mark. Cysteine 193 is a binding site for [2Fe-2S] cluster. Glutamate 444 contributes to the Mg(2+) binding site. The Proton acceptor role is filled by serine 470.

This sequence belongs to the IlvD/Edd family. As to quaternary structure, homodimer. [2Fe-2S] cluster serves as cofactor. Requires Mg(2+) as cofactor.

It carries out the reaction (2R)-2,3-dihydroxy-3-methylbutanoate = 3-methyl-2-oxobutanoate + H2O. The catalysed reaction is (2R,3R)-2,3-dihydroxy-3-methylpentanoate = (S)-3-methyl-2-oxopentanoate + H2O. Its pathway is amino-acid biosynthesis; L-isoleucine biosynthesis; L-isoleucine from 2-oxobutanoate: step 3/4. The protein operates within amino-acid biosynthesis; L-valine biosynthesis; L-valine from pyruvate: step 3/4. Functionally, functions in the biosynthesis of branched-chain amino acids. Catalyzes the dehydration of (2R,3R)-2,3-dihydroxy-3-methylpentanoate (2,3-dihydroxy-3-methylvalerate) into 2-oxo-3-methylpentanoate (2-oxo-3-methylvalerate) and of (2R)-2,3-dihydroxy-3-methylbutanoate (2,3-dihydroxyisovalerate) into 2-oxo-3-methylbutanoate (2-oxoisovalerate), the penultimate precursor to L-isoleucine and L-valine, respectively. The sequence is that of Dihydroxy-acid dehydratase from Aquifex aeolicus (strain VF5).